Here is a 20-residue protein sequence, read N- to C-terminus: DnaJ homolog subfamily C member 1 (20 aa).

Topologically, residues 1–20 are lumenal; it reads WESGDLELFDLVEEVXLNFY. The 3-residue stretch at 18–20 folds into the J domain; the sequence is NFY.

Interacts (via SANT 2 domain) with SERPINA3; the interaction delays the formation of the covalent inhibitory complex SERPINA3-chymotrypsin, but does not alter the catalytic activity of SERPINA3. Interacts (via SANT 2 domain) with ITIH4 (via C-terminus); the interaction protects ITIH4 against in vitro cleavage by kallikrein. Interacts (via J domain) with HSPA5. Interacts (via cytosolic domain) with ribosomes.

It localises to the endoplasmic reticulum membrane. Its subcellular location is the nucleus membrane. The protein localises to the microsome membrane. The chain is DnaJ homolog subfamily C member 1 (DNAJC1) from Canis lupus familiaris (Dog).